We begin with the raw amino-acid sequence, 169 residues long: Endoribonuclease YbeY (169 aa).

3 residues coordinate Zn(2+): His135, His139, and His145.

The protein belongs to the endoribonuclease YbeY family. It depends on Zn(2+) as a cofactor.

Its subcellular location is the cytoplasm. In terms of biological role, single strand-specific metallo-endoribonuclease involved in late-stage 70S ribosome quality control and in maturation of the 3' terminus of the 16S rRNA. The protein is Endoribonuclease YbeY of Lachnospira eligens (strain ATCC 27750 / DSM 3376 / VPI C15-48 / C15-B4) (Eubacterium eligens).